Here is a 520-residue protein sequence, read N- to C-terminus: Nucleolar protein 12 (520 aa).

Disordered stretches follow at residues 1-29 (MGKK…NVSV) and 41-185 (AGPV…DDDE). A compositionally biased stretch (acidic residues) spans 78–95 (ASEDQFMEDAPESPDAAE). A compositionally biased stretch (basic and acidic residues) spans 120-132 (SYMRRLAKEEQKE). Residues 144–168 (LEEESEDGEKESPQSEDGESEDEGA) show a composition bias toward acidic residues. RRM domains follow at residues 191 to 303 (RTVF…NVAH) and 311 to 421 (RCVF…RAKK). Residues 472-520 (EGNRATADGSSRIRVRTKSRGSKAKKDSRSKKRAAAYKAAGGKKAKIGK) are disordered. Residues 484-520 (IRVRTKSRGSKAKKDSRSKKRAAAYKAAGGKKAKIGK) show a composition bias toward basic residues.

It belongs to the RRM RBM34 family.

It localises to the nucleus. The protein resides in the nucleolus. Its function is as follows. Involved in pre-25S rRNA processing. The polypeptide is Nucleolar protein 12 (nop12) (Emericella nidulans (strain FGSC A4 / ATCC 38163 / CBS 112.46 / NRRL 194 / M139) (Aspergillus nidulans)).